Consider the following 338-residue polypeptide: Anthocyanidin reductase ((2S)-flavan-3-ol-forming) (338 aa).

Residues 18–21 (TGFV), Lys-48, 87–90 (VATP), and Tyr-168 contribute to the NADP(+) site.

Belongs to the NAD(P)-dependent epimerase/dehydratase family. Dihydroflavonol-4-reductase subfamily. In terms of tissue distribution, expressed in seeds, grape skins, flowers and leaves.

It carries out the reaction a (2S,3R)-flavan-3-ol + 2 NADP(+) = an anthocyanidin with a 3-hydroxy group + 2 NADPH + 2 H(+). The enzyme catalyses a (2S,3S)-flavan-3-ol + 2 NADP(+) = an anthocyanidin with a 3-hydroxy group + 2 NADPH + 2 H(+). Its pathway is secondary metabolite biosynthesis; flavonoid biosynthesis. Inhibited at NaCl concentrations higher than 200 mM. Produces the terminal flavan-3-ol monomers required for the formation of proanthocyanidins or condensed tannins in leaves and flowers, as well as in the skin and seeds of developing berries. Behaves as a reductase and as a C-3 epimerase. Catalyzes the double reduction of anthocyanidins, producing a mixture of (2S,3S)- and (2S,3R)-flavan-3-ols. The enzyme catalyzes sequential hydride transfers to C-2 and C-4, respectively and epimerization at C-3 is achieved by tautomerization that occurs between the two hydride transfers. Converts cyanidin, pelargonidin and delphinidin into catechin and epicatechin, afzelechin and epiafzelechin, and gallocatechin and epigallocatechin respectively. This is Anthocyanidin reductase ((2S)-flavan-3-ol-forming) from Vitis vinifera (Grape).